We begin with the raw amino-acid sequence, 373 residues long: Glutamine synthetase (373 aa).

Ala-2 is subject to N-acetylalanine. The interval 2–25 (ATSASSHLNKGIKQVYMSLPQGEK) is required for glutamine-induced ubiquitination by CRL4(CRBN) and proteasomal degradation. 2 positions are modified to N6-acetyllysine: Lys-11 and Lys-14. The region spanning 24-106 (EKVQAMYIWI…VFCEVFKYNR (83 aa)) is the GS beta-grasp domain. Phosphotyrosine is present on Tyr-104. The GS catalytic domain maps to 113–373 (LRHTCKRIMD…TGDEPFQYKN (261 aa)). Glu-134 contributes to the ATP binding site. Residues Glu-134, Glu-136, Glu-196, and Glu-203 each contribute to the Mn(2+) site. Position 203-208 (203-208 (EFQIGP)) interacts with ATP. Residue 246 to 247 (NW) coordinates L-glutamate. Residue His-253 coordinates Mn(2+). Residues 255–257 (NFS), Arg-319, and Arg-324 contribute to the ATP site. An L-glutamate-binding site is contributed by Arg-319. Residue 336–338 (YFE) coordinates ADP. Glu-338 contacts Mn(2+). Arg-340 serves as a coordination point for L-glutamate. Ser-343 is modified (phosphoserine).

This sequence belongs to the glutamine synthetase family. As to quaternary structure, decamer; composed of two pentamers. Interacts with PALMD. Interacts with RHOJ. Interacts with BEST2; this interaction tethers a fraction of GLUL to the membrane, causing a decrease of cytosolic glutamine synthase (GS) activity and inhibits the chloride channel activity of BEST2 by affecting the gating at the aperture in the absence of intracellular glutamate. It depends on Mg(2+) as a cofactor. Requires Mn(2+) as cofactor. In terms of processing, palmitoylated; undergoes autopalmitoylation. Acetylated by EP300/p300; acetylation is stimulated by increased glutamine levels and promotes ubiquitin-mediated proteasomal degradation. Post-translationally, ubiquitinated by ZNRF1. Ubiquitinated by the DCX (DDB1-CUL4-X-box) E3 ubiquitin-protein ligase complex called CRL4(CRBN), leading to proteasomal degradation.

It is found in the cytoplasm. The protein resides in the cytosol. The protein localises to the microsome. It localises to the mitochondrion. Its subcellular location is the cell membrane. It carries out the reaction L-glutamate + NH4(+) + ATP = L-glutamine + ADP + phosphate + H(+). It catalyses the reaction L-cysteinyl-[protein] + hexadecanoyl-CoA = S-hexadecanoyl-L-cysteinyl-[protein] + CoA. With respect to regulation, glutamine synthetase activity is inhibited by methionine sulfoximine (MSO). Its function is as follows. Glutamine synthetase that catalyzes the ATP-dependent conversion of glutamate and ammonia to glutamine. Its role depends on tissue localization: in the brain, it regulates the levels of toxic ammonia and converts neurotoxic glutamate to harmless glutamine, whereas in the liver, it is one of the enzymes responsible for the removal of ammonia. Plays a key role in ammonium detoxification during erythropoiesis: the glutamine synthetase activity is required to remove ammonium generated by porphobilinogen deaminase (HMBS) during heme biosynthesis to prevent ammonium accumulation and oxidative stress. Essential for proliferation of fetal skin fibroblasts. Independently of its glutamine synthetase activity, required for endothelial cell migration during vascular development. Involved in angiogenesis by regulating membrane localization and activation of the GTPase RHOJ, possibly by promoting RHOJ palmitoylation. May act as a palmitoyltransferase for RHOJ: able to autopalmitoylate and then transfer the palmitoyl group to RHOJ. Plays a role in ribosomal 40S subunit biogenesis. Through the interaction with BEST2, inhibits BEST2 channel activity by affecting the gating at the aperture in the absence of intracellular L-glutamate, but sensitizes BEST2 to intracellular L-glutamate, which promotes the opening of BEST2 and thus relieves its inhibitory effect on BEST2. The polypeptide is Glutamine synthetase (Sus scrofa (Pig)).